The primary structure comprises 312 residues: Small ribosomal subunit biogenesis GTPase RsgA (312 aa).

The CP-type G domain occupies 86–245 (QSFLKRPAVA…LADTPGFNRP (160 aa)). GTP is bound by residues 135-138 (TKID) and 187-195 (GPSGVGKTS). Zn(2+)-binding residues include cysteine 270, cysteine 275, histidine 277, and cysteine 283.

The protein belongs to the TRAFAC class YlqF/YawG GTPase family. RsgA subfamily. In terms of assembly, monomer. Associates with 30S ribosomal subunit, binds 16S rRNA. Requires Zn(2+) as cofactor.

The protein resides in the cytoplasm. One of several proteins that assist in the late maturation steps of the functional core of the 30S ribosomal subunit. Helps release RbfA from mature subunits. May play a role in the assembly of ribosomal proteins into the subunit. Circularly permuted GTPase that catalyzes slow GTP hydrolysis, GTPase activity is stimulated by the 30S ribosomal subunit. This is Small ribosomal subunit biogenesis GTPase RsgA from Prochlorococcus marinus (strain NATL1A).